The primary structure comprises 297 residues: Alarmin release inhibitor (297 aa).

N-linked (GlcNAc...) asparagine glycosylation is found at Asn-107, Asn-175, and Asn-190. One can recognise a Sushi domain in the interval 151–211 (TYDPTPNTPT…WVPTLGVCPK (61 aa)). A disulfide bridge links Cys-183 with Cys-209.

Interacts with mouse IL33 (in reduced form).

The protein resides in the secreted. The protein localises to the host nucleus. Secreted protein which suppresses the host allergic response by inhibiting the interaction of host IL33 with its receptor in order to maintain parasitic infection. Binds to both host IL33 and host nuclear DNA and this dual binding blocks the interaction of IL33 with its receptor, and tethers IL33 within necrotic cells, preventing its release, and blocking allergic response initiation. The protein is Alarmin release inhibitor of Heligmosomoides polygyrus (Parasitic roundworm).